The chain runs to 607 residues: Elongation factor 4 (607 aa).

Residues 11 to 193 enclose the tr-type G domain; sequence SKIRNFSIIA…QIVEKVPAPT (183 aa). Residues 23 to 28 and 140 to 143 contribute to the GTP site; these read DHGKST and NKID.

Belongs to the TRAFAC class translation factor GTPase superfamily. Classic translation factor GTPase family. LepA subfamily.

The protein localises to the cell membrane. The enzyme catalyses GTP + H2O = GDP + phosphate + H(+). Functionally, required for accurate and efficient protein synthesis under certain stress conditions. May act as a fidelity factor of the translation reaction, by catalyzing a one-codon backward translocation of tRNAs on improperly translocated ribosomes. Back-translocation proceeds from a post-translocation (POST) complex to a pre-translocation (PRE) complex, thus giving elongation factor G a second chance to translocate the tRNAs correctly. Binds to ribosomes in a GTP-dependent manner. The protein is Elongation factor 4 of Bacillus cereus (strain AH820).